The sequence spans 208 residues: Proheparin-binding EGF-like growth factor (208 aa).

An N-terminal signal peptide occupies residues 1-23 (MKLLPSVMLKLFLAAVLSALVTG). The propeptide occupies 24 to 62 (ESLERLRRGLAAATSNPDPPTGSTNQLLPTGGDRAQGVQ). The Extracellular portion of the chain corresponds to 24–160 (ESLERLRRGL…ENPLYTYDHT (137 aa)). 2 disordered regions span residues 35–57 (AATS…GGDR) and 80–104 (PQGL…LGKK). Over residues 36 to 51 (ATSNPDPPTGSTNQLL) the composition is skewed to polar residues. Threonine 85 is a glycosylation site (O-linked (GalNAc...) threonine). The span at 91–102 (NGKKKKKGKGLG) shows a compositional bias: basic residues. The 41-residue stretch at 104–144 (KRDPCLRKYKDYCIHGECRYLQEFRTPSCKCLPGYHGHRCH) folds into the EGF-like domain. 3 cysteine pairs are disulfide-bonded: cysteine 108-cysteine 121, cysteine 116-cysteine 132, and cysteine 134-cysteine 143. The propeptide at 149 to 208 (PVENPLYTYDHTTVLAVVAVVLSSVCLLVIVGLLMFRYHRRGGYDLESEEKVKLGVASSH) is C-terminal. A helical transmembrane segment spans residues 161–184 (TVLAVVAVVLSSVCLLVIVGLLMF). At 185-208 (RYHRRGGYDLESEEKVKLGVASSH) the chain is on the cytoplasmic side.

Interacts with FBLN1. Interacts with EGFR and ERBB4. Post-translationally, O-glycosylated. As to expression, most abundant in kidney, skeletal muscle, lung, spleen, brain and heart.

It is found in the secreted. The protein localises to the extracellular space. It localises to the cell membrane. Functionally, growth factor that mediates its effects via EGFR, ERBB2 and ERBB4. Required for normal cardiac valve formation and normal heart function. Promotes smooth muscle cell proliferation. May be involved in macrophage-mediated cellular proliferation. It is mitogenic for fibroblasts, but not endothelial cells. It is able to bind EGF receptor/EGFR with higher affinity than EGF itself and is a far more potent mitogen for smooth muscle cells than EGF. Also acts as a diphtheria toxin receptor. The protein is Proheparin-binding EGF-like growth factor (Hbegf) of Mus musculus (Mouse).